The primary structure comprises 553 residues: Glucose-6-phosphate isomerase (553 aa).

Catalysis depends on Glu-357, which acts as the Proton donor. Catalysis depends on residues His-388 and Lys-514. The tract at residues 527–553 (ADSPAAQSDSSTDALVRRYRTERGRTA) is disordered. Residues 541-553 (LVRRYRTERGRTA) show a composition bias toward basic and acidic residues.

This sequence belongs to the GPI family.

It is found in the cytoplasm. The catalysed reaction is alpha-D-glucose 6-phosphate = beta-D-fructose 6-phosphate. Its pathway is carbohydrate biosynthesis; gluconeogenesis. It functions in the pathway carbohydrate degradation; glycolysis; D-glyceraldehyde 3-phosphate and glycerone phosphate from D-glucose: step 2/4. In terms of biological role, catalyzes the reversible isomerization of glucose-6-phosphate to fructose-6-phosphate. In Mycolicibacterium vanbaalenii (strain DSM 7251 / JCM 13017 / BCRC 16820 / KCTC 9966 / NRRL B-24157 / PYR-1) (Mycobacterium vanbaalenii), this protein is Glucose-6-phosphate isomerase.